The primary structure comprises 503 residues: Glycerol kinase (503 aa).

T17 serves as a coordination point for ADP. ATP-binding residues include T17, T18, and S19. Position 17 (T17) interacts with sn-glycerol 3-phosphate. Residue R21 coordinates ADP. R87, E88, Y141, and D245 together coordinate sn-glycerol 3-phosphate. Glycerol contacts are provided by R87, E88, Y141, D245, and Q246. Positions 267 and 310 each coordinate ADP. T267, G310, Q314, and G411 together coordinate ATP. ADP-binding residues include G411 and N415.

Belongs to the FGGY kinase family.

It catalyses the reaction glycerol + ATP = sn-glycerol 3-phosphate + ADP + H(+). Its pathway is polyol metabolism; glycerol degradation via glycerol kinase pathway; sn-glycerol 3-phosphate from glycerol: step 1/1. Its activity is regulated as follows. Inhibited by fructose 1,6-bisphosphate (FBP). Key enzyme in the regulation of glycerol uptake and metabolism. Catalyzes the phosphorylation of glycerol to yield sn-glycerol 3-phosphate. This is Glycerol kinase from Pseudomonas tolaasii.